The following is a 484-amino-acid chain: Poly(A) RNA polymerase GLD2 (484 aa).

Phosphoserine occurs at positions 62 and 69. The Nuclear localization signal signature appears at 76–92 (KRISDEKAFRLDGKRQR). A Phosphoserine modification is found at serine 95. Mg(2+) contacts are provided by aspartate 213 and aspartate 215. Residues 386-440 (SLGDLLLGFLKYYATEFDWNTQMISVREAKAIPRPDDMEWRNKYICVEEPFDGTN) enclose the PAP-associated domain.

The protein belongs to the DNA polymerase type-B-like family. GLD2 subfamily. As to quaternary structure, interacts with CPEB1, CPEB2, CPSF1 and PABPC1. Interacts with QKI isoform QKI7; promoting recruitment to miRNA miR-122 and miR-122 stabilization. It depends on Mg(2+) as a cofactor. Mn(2+) serves as cofactor.

It is found in the cytoplasm. It localises to the nucleus. The catalysed reaction is RNA(n) + ATP = RNA(n)-3'-adenine ribonucleotide + diphosphate. Cytoplasmic poly(A) RNA polymerase that adds successive AMP monomers to the 3'-end of specific RNAs, forming a poly(A) tail. In contrast to the canonical nuclear poly(A) RNA polymerase, it only adds poly(A) to selected cytoplasmic mRNAs. Does not play a role in replication-dependent histone mRNA degradation. Adds a single nucleotide to the 3' end of specific miRNAs, monoadenylation stabilizes and prolongs the activity of some but not all miRNAs. The polypeptide is Poly(A) RNA polymerase GLD2 (Rattus norvegicus (Rat)).